Reading from the N-terminus, the 166-residue chain is Phosphopantetheine adenylyltransferase (166 aa).

S9 serves as a coordination point for substrate. ATP-binding positions include 9–10 and H17; that span reads SF. K41, T74, and R88 together coordinate substrate. ATP is bound by residues 89 to 91, E99, and 124 to 130; these read GLR and DSFISSS.

The protein belongs to the bacterial CoaD family. Homohexamer. Mg(2+) serves as cofactor.

Its subcellular location is the cytoplasm. The catalysed reaction is (R)-4'-phosphopantetheine + ATP + H(+) = 3'-dephospho-CoA + diphosphate. The protein operates within cofactor biosynthesis; coenzyme A biosynthesis; CoA from (R)-pantothenate: step 4/5. In terms of biological role, reversibly transfers an adenylyl group from ATP to 4'-phosphopantetheine, yielding dephospho-CoA (dPCoA) and pyrophosphate. In Lactobacillus johnsonii (strain CNCM I-12250 / La1 / NCC 533), this protein is Phosphopantetheine adenylyltransferase.